Reading from the N-terminus, the 302-residue chain is uncharacterized protein (302 aa).

Functionally, may be a membrane-bound protein, possibly involved in IAA or IAA-Lysine transport. This is an uncharacterized protein from Pseudomonas savastanoi (Pseudomonas syringae pv. savastanoi).